A 196-amino-acid chain; its full sequence is Carnitine operon protein CaiE (196 aa).

The interval Thr173 to Arg196 is disordered.

It belongs to the transferase hexapeptide repeat family.

It participates in amine and polyamine metabolism; carnitine metabolism. Overproduction of CaiE stimulates the activity of CaiB and CaiD. This Escherichia coli (strain SMS-3-5 / SECEC) protein is Carnitine operon protein CaiE.